The following is a 195-amino-acid chain: Imidazoleglycerol-phosphate dehydratase (195 aa).

Belongs to the imidazoleglycerol-phosphate dehydratase family.

It is found in the cytoplasm. The catalysed reaction is D-erythro-1-(imidazol-4-yl)glycerol 3-phosphate = 3-(imidazol-4-yl)-2-oxopropyl phosphate + H2O. Its pathway is amino-acid biosynthesis; L-histidine biosynthesis; L-histidine from 5-phospho-alpha-D-ribose 1-diphosphate: step 6/9. The sequence is that of Imidazoleglycerol-phosphate dehydratase from Burkholderia cenocepacia (strain ATCC BAA-245 / DSM 16553 / LMG 16656 / NCTC 13227 / J2315 / CF5610) (Burkholderia cepacia (strain J2315)).